Consider the following 310-residue polypeptide: Methionyl-tRNA formyltransferase (310 aa).

110–113 (SVLP) contacts (6S)-5,6,7,8-tetrahydrofolate. Residues 283–310 (TVQPPGKKSMNAADWARGARAEDIRRAR) form a disordered region. Residues 299 to 310 (RGARAEDIRRAR) show a composition bias toward basic and acidic residues.

The protein belongs to the Fmt family.

The enzyme catalyses L-methionyl-tRNA(fMet) + (6R)-10-formyltetrahydrofolate = N-formyl-L-methionyl-tRNA(fMet) + (6S)-5,6,7,8-tetrahydrofolate + H(+). Attaches a formyl group to the free amino group of methionyl-tRNA(fMet). The formyl group appears to play a dual role in the initiator identity of N-formylmethionyl-tRNA by promoting its recognition by IF2 and preventing the misappropriation of this tRNA by the elongation apparatus. This chain is Methionyl-tRNA formyltransferase, found in Mycolicibacterium gilvum (strain PYR-GCK) (Mycobacterium gilvum (strain PYR-GCK)).